The sequence spans 270 residues: MLIDWFTVIAQLINFLVLVWLLKHFLYRPILNTIDAREKRIADELADADSKIAEAEQQREAFQQKNAEFDQQRTAQMNKVGEEAKAERTRLLEEVRQESDALRSKLKLALKNEQLSLKDSLSQRAREEVFAIVRKALSDLASTSLEASMADVFVKRLDALADAEKTSLQATFQESTEVLIVHTAFDLPKKQITQITKALHGLLGDGVVIEFATDANLISGIEIDSHGQKIGWSIADYLTTLTKRVNDVMLSHNAVQDESPELEKSQEQAS.

The chain crosses the membrane as a helical span at residues 2–22; that stretch reads LIDWFTVIAQLINFLVLVWLL.

The protein belongs to the ATPase B chain family. F-type ATPases have 2 components, F(1) - the catalytic core - and F(0) - the membrane proton channel. F(1) has five subunits: alpha(3), beta(3), gamma(1), delta(1), epsilon(1). F(0) has three main subunits: a(1), b(2) and c(10-14). The alpha and beta chains form an alternating ring which encloses part of the gamma chain. F(1) is attached to F(0) by a central stalk formed by the gamma and epsilon chains, while a peripheral stalk is formed by the delta and b chains.

It is found in the cell inner membrane. F(1)F(0) ATP synthase produces ATP from ADP in the presence of a proton or sodium gradient. F-type ATPases consist of two structural domains, F(1) containing the extramembraneous catalytic core and F(0) containing the membrane proton channel, linked together by a central stalk and a peripheral stalk. During catalysis, ATP synthesis in the catalytic domain of F(1) is coupled via a rotary mechanism of the central stalk subunits to proton translocation. Its function is as follows. Component of the F(0) channel, it forms part of the peripheral stalk, linking F(1) to F(0). In Marinomonas sp. (strain MWYL1), this protein is ATP synthase subunit b 1.